The following is a 599-amino-acid chain: Growth factor receptor-bound protein 10 (599 aa).

Residues 1-23 (MNNDINSSVESLNSACNMQSDTD) show a composition bias toward polar residues. The tract at residues 1–122 (MNNDINSSVE…QPPAKHFPPG (122 aa)) is disordered. Residues 32-43 (QSASNQPSASSS) show a composition bias toward low complexity. Polar residues predominate over residues 44-61 (RGQPQASPRQKMQRSQPV). Position 50 is a phosphoserine (serine 50). The segment covering 97 to 118 (GSPPSVAPSSLPPPPSQPPAKH) has biased composition (pro residues). Serine 98 is modified (phosphoserine; by MTOR, MAPK1 and MAPK3). Residues 171 to 255 (LRKDVKVFSE…SKFLFRKNYA (85 aa)) enclose the Ras-associating domain. Residues 295 to 404 (CPEIQGFLQV…WMTAFRLLKY (110 aa)) form the PH domain. Serine 433 is subject to Phosphoserine; by MTOR and PKB/AKT1. Serine 436 carries the post-translational modification Phosphoserine. A Phosphoserine; by MTOR, MAPK1 and MAPK3 modification is found at serine 481. One can recognise an SH2 domain in the interval 498–594 (WFHGRISREE…VLPCKLKHHC (97 aa)).

The protein belongs to the GRB7/10/14 family. In terms of assembly, interacts with ligand-activated tyrosine kinase receptors, including FGFR1, INSR, IGF1R, MET and PDGFRB in a phosphotyrosine-dependent manner through the SH2 domain. Poorly binds to the EGFR. Directly interacts with MAP3K14/NIK and is recruited to the EGFR-ERBB2 complex. Interacts with GIGYF1/PERQ1 and GIGYF2/TNRC15. When unphosphorylated, interacts with AKT1 and when phosphorylated with YWHAE/14-3-3 epsilon. Interacts with NEDD4. Interacts with LRP6, thus interfering with the binding of AXIN1 to LRP6. Binds relatively non-specifically to several phosphoinositides, including PI(5)P, PI(4,5)P2, PI(3,4)P2 and PI(3,4,5)P3, with modest affinities through the PH domain. Binds to activated NRAS. Post-translationally, phosphorylated on serine residues upon EGF, FGF and PDGF stimulation.

Its subcellular location is the cytoplasm. Its activity is regulated as follows. Phosphorylation by mTORC1 stabilizes and activates GRB10 constituting a feedback pathway by which mTORC1 inhibits INSR-dependent signaling. In terms of biological role, adapter protein which modulates coupling of a number of cell surface receptor kinases with specific signaling pathways. Binds to, and suppress signals from, activated receptors tyrosine kinases, including the insulin (INSR) and insulin-like growth factor (IGF1R) receptors. The inhibitory effect can be achieved by 2 mechanisms: interference with the signaling pathway and increased receptor degradation. Delays and reduces AKT1 phosphorylation in response to insulin stimulation. Blocks association between INSR and IRS1 and IRS2 and prevents insulin-stimulated IRS1 and IRS2 tyrosine phosphorylation. Recruits NEDD4 to IGF1R, leading to IGF1R ubiquitination, increased internalization and degradation by both the proteasomal and lysosomal pathways. A similar role in the mediation of ubiquitination also has been suggested with INSR. Negatively regulates Wnt signaling by interacting with LRP6 intracellular portion and interfering with the binding of AXIN1 to LRP6. Positive regulator of the KDR/VEGFR-2 signaling pathway. May inhibit NEDD4-mediated degradation of KDR/VEGFR-2. In Rattus norvegicus (Rat), this protein is Growth factor receptor-bound protein 10 (Grb10).